The primary structure comprises 450 residues: Glutamate--tRNA ligase 2 (450 aa).

The 'HIGH' region signature appears at 10–20 (PSPTGFLHIGG). Residues 232-236 (KLSKR) carry the 'KMSKS' region motif. ATP is bound at residue Lys-235.

This sequence belongs to the class-I aminoacyl-tRNA synthetase family. Glutamate--tRNA ligase type 1 subfamily. Monomer.

It is found in the cytoplasm. The catalysed reaction is tRNA(Glu) + L-glutamate + ATP = L-glutamyl-tRNA(Glu) + AMP + diphosphate. Functionally, catalyzes the attachment of glutamate to tRNA(Glu) in a two-step reaction: glutamate is first activated by ATP to form Glu-AMP and then transferred to the acceptor end of tRNA(Glu). The polypeptide is Glutamate--tRNA ligase 2 (Wolbachia pipientis subsp. Culex pipiens (strain wPip)).